Consider the following 139-residue polypeptide: Arsenate reductase (139 aa).

Active-site nucleophile residues include cysteine 10, cysteine 82, and cysteine 89. 2 disulfides stabilise this stretch: cysteine 10-cysteine 82 and cysteine 82-cysteine 89.

This sequence belongs to the low molecular weight phosphotyrosine protein phosphatase family. Thioredoxin-coupled ArsC subfamily. In terms of assembly, monomer.

It localises to the cytoplasm. It carries out the reaction arsenate + [thioredoxin]-dithiol + H(+) = arsenite + [thioredoxin]-disulfide + H2O. With respect to regulation, activity is potassium and sulfate-independent. Functionally, catalyzes the reduction of arsenate [As(V)] to arsenite [As(III)]. In vitro, can dephosphorylate para-nitrophenyl phosphate (pNPP). The sequence is that of Arsenate reductase from Bacillus subtilis (strain 168).